Consider the following 386-residue polypeptide: Enoyl-[acyl-carrier-protein] reductase 1, mitochondrial (386 aa).

A mitochondrion-targeting transit peptide spans 1–22; it reads MYSVLKQSIRPRLLATHNQFRT. Tyr79 functions as the Proton donor in the catalytic mechanism. Residues Asn172, 199-202, 222-224, 296-299, 321-323, and Lys381 contribute to the NADP(+) site; these read TSAV, RDR, YGGM, and FWV.

The protein belongs to the zinc-containing alcohol dehydrogenase family. Quinone oxidoreductase subfamily. In terms of assembly, homodimer and heterodimer with ETR2.

It localises to the mitochondrion. The catalysed reaction is a 2,3-saturated acyl-[ACP] + NADP(+) = a (2E)-enoyl-[ACP] + NADPH + H(+). It carries out the reaction (2E,4E)-hexadienoyl-CoA + NADPH + H(+) = (4E)-hexenoyl-CoA + NADP(+). The enzyme catalyses (2E)-hexenoyl-CoA + NADPH + H(+) = hexanoyl-CoA + NADP(+). Catalyzes the NADPH-dependent reduction of trans-2-enoyl thioesters in mitochondrial fatty acid synthesis (fatty acid synthesis type II). Fatty acid chain elongation in mitochondria uses acyl carrier protein (ACP) as an acyl group carrier, but the enzyme accepts both ACP and CoA thioesters as substrates in vitro. Required for respiration and the maintenance of the mitochondrial compartment. The sequence is that of Enoyl-[acyl-carrier-protein] reductase 1, mitochondrial (ETR1) from Candida tropicalis (Yeast).